Reading from the N-terminus, the 345-residue chain is Protein arginine N-methyltransferase 1 (345 aa).

In terms of domain architecture, SAM-dependent MTase PRMT-type spans 24 to 345 (ADYYFDSYSH…VKNTQQYRMR (322 aa)). S-adenosyl-L-methionine is bound by residues H37, R46, G70, E92, and E121. Catalysis depends on residues E136 and E145.

The protein belongs to the class I-like SAM-binding methyltransferase superfamily. Protein arginine N-methyltransferase family. Phosphorylated during flagellum resorption.

The protein resides in the nucleus. It is found in the cell projection. It localises to the cilium. The protein localises to the flagellum. It carries out the reaction L-arginyl-[protein] + S-adenosyl-L-methionine = N(omega)-methyl-L-arginyl-[protein] + S-adenosyl-L-homocysteine + H(+). It catalyses the reaction L-arginyl-[protein] + 2 S-adenosyl-L-methionine = N(omega),N(omega)-dimethyl-L-arginyl-[protein] + 2 S-adenosyl-L-homocysteine + 2 H(+). Its function is as follows. Arginine methyltransferase that methylates (mono and asymmetric dimethylation) the guanidino nitrogens of arginyl residues present in target proteins. Mediates asymmetric dimethylation of components of the axoneme during flagellum resorption, such as CCDC40/FAP172, CCDC65/FAP250, RSP1, RSP2, RPS5, RSP6, and tektin. The sequence is that of Protein arginine N-methyltransferase 1 (PRMT1) from Chlamydomonas reinhardtii (Chlamydomonas smithii).